A 337-amino-acid chain; its full sequence is GTP 3',8-cyclase (337 aa).

A Radical SAM core domain is found at 1–226 (MNRVDYLRIS…REKIRQKWGL (226 aa)). Arg8 lines the GTP pocket. The [4Fe-4S] cluster site is built by Cys15 and Cys19. Tyr21 is a binding site for S-adenosyl-L-methionine. [4Fe-4S] cluster is bound at residue Cys22. Position 60 (Arg60) interacts with GTP. Gly64 is a binding site for S-adenosyl-L-methionine. Thr91 provides a ligand contact to GTP. Ser115 provides a ligand contact to S-adenosyl-L-methionine. Lys155 provides a ligand contact to GTP. Met189 lines the S-adenosyl-L-methionine pocket. 2 residues coordinate [4Fe-4S] cluster: Cys260 and Cys263. 265–267 (RMR) is a GTP binding site. Cys277 contacts [4Fe-4S] cluster.

The protein belongs to the radical SAM superfamily. MoaA family. As to quaternary structure, monomer and homodimer. [4Fe-4S] cluster is required as a cofactor.

The enzyme catalyses GTP + AH2 + S-adenosyl-L-methionine = (8S)-3',8-cyclo-7,8-dihydroguanosine 5'-triphosphate + 5'-deoxyadenosine + L-methionine + A + H(+). It participates in cofactor biosynthesis; molybdopterin biosynthesis. Catalyzes the cyclization of GTP to (8S)-3',8-cyclo-7,8-dihydroguanosine 5'-triphosphate. The polypeptide is GTP 3',8-cyclase (Crocosphaera subtropica (strain ATCC 51142 / BH68) (Cyanothece sp. (strain ATCC 51142))).